The chain runs to 223 residues: Uracil-DNA glycosylase (223 aa).

Residue aspartate 67 is the Proton acceptor of the active site.

The protein belongs to the uracil-DNA glycosylase (UDG) superfamily. UNG family.

It is found in the cytoplasm. The catalysed reaction is Hydrolyzes single-stranded DNA or mismatched double-stranded DNA and polynucleotides, releasing free uracil.. Functionally, excises uracil residues from the DNA which can arise as a result of misincorporation of dUMP residues by DNA polymerase or due to deamination of cytosine. The chain is Uracil-DNA glycosylase from Borreliella burgdorferi (strain ZS7) (Borrelia burgdorferi).